The chain runs to 242 residues: tRNA (guanine-N(1)-)-methyltransferase (242 aa).

S-adenosyl-L-methionine-binding positions include G115 and 134-139 (LGDFVL). The span at 210-224 (QEQREQRTAARRPDL) shows a compositional bias: basic and acidic residues. The disordered stretch occupies residues 210 to 242 (QEQREQRTAARRPDLMQRWQQRFGADNDSEHRA).

It belongs to the RNA methyltransferase TrmD family. In terms of assembly, homodimer.

It localises to the cytoplasm. It catalyses the reaction guanosine(37) in tRNA + S-adenosyl-L-methionine = N(1)-methylguanosine(37) in tRNA + S-adenosyl-L-homocysteine + H(+). Its function is as follows. Specifically methylates guanosine-37 in various tRNAs. This is tRNA (guanine-N(1)-)-methyltransferase from Synechococcus sp. (strain WH7803).